The following is a 312-amino-acid chain: MATPTRALSQKEQDIQMMLAAEVHLGTKNCNFQMERYVFKRRNDGIYIINLGKTWEKLQLAARVIVAIENPKDIIVQSARPYGQRAVLKFAQYTGAHAIAGRHTPGTFTNQLQTSFSEPRLLILTDPRTDHQPIKEAALGNIPTIAFCDTDSPMRYVDIGIPANNKGKHSIGCLFWLLARMVLQMRRTIAPGHKWDVMVDLFFYREPEEPKEQEGDEVVAAPDYGITDYQATALGGLGGGDWGAPITDAPQWGADVPAVAPIPAVPGSNWGDAAPMPSAVPIATDGWDAAAAPPVAVPPPVVEGVPPPAGWE.

This sequence belongs to the universal ribosomal protein uS2 family. In terms of assembly, component of the small ribosomal subunit. Mature ribosomes consist of a small (40S) and a large (60S) subunit. The 40S subunit contains about 33 different proteins and 1 molecule of RNA (18S). The 60S subunit contains about 49 different proteins and 3 molecules of RNA (25S, 5.8S and 5S). Interacts with ribosomal protein S21.

Its subcellular location is the cytoplasm. In terms of biological role, required for the assembly and/or stability of the 40S ribosomal subunit. Required for the processing of the 20S rRNA-precursor to mature 18S rRNA in a late step of the maturation of 40S ribosomal subunits. This chain is Small ribosomal subunit protein uS2, found in Vitis vinifera (Grape).